The primary structure comprises 204 residues: Large ribosomal subunit protein uL4 (204 aa).

Positions 53-73 (AFVSGGGKKPWRQKGRGGARA) are disordered.

The protein belongs to the universal ribosomal protein uL4 family. In terms of assembly, part of the 50S ribosomal subunit.

Its function is as follows. One of the primary rRNA binding proteins, this protein initially binds near the 5'-end of the 23S rRNA. It is important during the early stages of 50S assembly. It makes multiple contacts with different domains of the 23S rRNA in the assembled 50S subunit and ribosome. In terms of biological role, forms part of the polypeptide exit tunnel. The sequence is that of Large ribosomal subunit protein uL4 from Campylobacter concisus (strain 13826).